Here is a 116-residue protein sequence, read N- to C-terminus: NADH-ubiquinone oxidoreductase chain 3 (116 aa).

The next 3 helical transmembrane spans lie at 3 to 23, 56 to 76, and 85 to 105; these read LITT…TVSF, FFLI…LLPL, and PALT…GLIY.

It belongs to the complex I subunit 3 family.

The protein localises to the mitochondrion membrane. The enzyme catalyses a ubiquinone + NADH + 5 H(+)(in) = a ubiquinol + NAD(+) + 4 H(+)(out). In terms of biological role, core subunit of the mitochondrial membrane respiratory chain NADH dehydrogenase (Complex I) that is believed to belong to the minimal assembly required for catalysis. Complex I functions in the transfer of electrons from NADH to the respiratory chain. The immediate electron acceptor for the enzyme is believed to be ubiquinone. This chain is NADH-ubiquinone oxidoreductase chain 3 (MT-ND3), found in Salmo trutta (Brown trout).